An 87-amino-acid polypeptide reads, in one-letter code: Small ribosomal subunit protein uS15c (87 aa).

Belongs to the universal ribosomal protein uS15 family. Part of the 30S ribosomal subunit.

Its subcellular location is the plastid. The protein localises to the chloroplast. The sequence is that of Small ribosomal subunit protein uS15c (rps15) from Nymphaea alba (White water-lily).